The sequence spans 380 residues: Alkaline protease (380 aa).

The signal sequence occupies residues 1 to 27 (MKKPLGKIVASTALLISVAFSSSIASA). Residues 28 to 111 (AEEAKEKYLI…IEEDAEVTTM (84 aa)) constitute a propeptide that is removed on maturation. Positions 34–111 (KYLIGFNEQE…IEEDAEVTTM (78 aa)) constitute an Inhibitor I9 domain. Residue Gln-113 participates in Ca(2+) binding. Residues 116–379 (PWGISRVQAP…SGLVNAEAAT (264 aa)) form the Peptidase S8 domain. Asp-143 functions as the Charge relay system in the catalytic mechanism. Asp-151 contributes to the Ca(2+) binding site. His-173 (charge relay system) is an active-site residue. 7 residues coordinate Ca(2+): Leu-184, Asn-186, Ile-188, Val-190, Ala-274, Tyr-276, and Ala-279. Residue Ser-326 is the Charge relay system of the active site.

The protein belongs to the peptidase S8 family. Requires Ca(2+) as cofactor.

It is found in the secreted. In Shouchella clausii (Alkalihalobacillus clausii), this protein is Alkaline protease.